The primary structure comprises 149 residues: Calmodulin (149 aa).

Position 2 is an N-acetylalanine (A2). 4 consecutive EF-hand domains span residues 8-43 (EQIAEFKEAFSLFDKDGDGCITTKELGTVMRSLGQN), 44-79 (PTEAELQDMINEVDADGNGTIDFPEFLNLMARKMKD), 81-116 (DSEEELKEAFRVFDKDQNGFISAAELRHVMTNLGEK), and 117-149 (LTDEEVDEMIREADVDGDGQINYEEFVKVMMAK). Residues D21, D23, D25, C27, E32, D57, D59, N61, T63, E68, D94, D96, N98, and E105 each coordinate Ca(2+). K116 is subject to N6,N6,N6-trimethyllysine. Positions 130, 132, 134, 136, and 141 each coordinate Ca(2+).

The protein belongs to the calmodulin family. The N-terminus is blocked.

Its function is as follows. Calmodulin mediates the control of a large number of enzymes, ion channels and other proteins by Ca(2+). Among the enzymes to be stimulated by the calmodulin-Ca(2+) complex are a number of protein kinases and phosphatases. The polypeptide is Calmodulin (Spinacia oleracea (Spinach)).